A 265-amino-acid chain; its full sequence is Leucine-rich repeat-containing protein Bf66946 (265 aa).

Residues 1-20 form the signal peptide; sequence MALRDIFLLSMAMTAVTVQA. 2 disulfides stabilise this stretch: cysteine 21–cysteine 27 and cysteine 25–cysteine 39. The 30-residue stretch at 21–50 folds into the LRRNT domain; it reads CPSACKCTVSLYGEMVVACGGMGLTEIPED. LRR repeat units follow at residues 51-75, 76-99, and 100-123; these read IPHR…SFKG, LRNL…ALRH, and LGHL…LFDF. N-linked (GlcNAc...) asparagine glycosylation occurs at asparagine 64. In terms of domain architecture, LRRCT spans 142–193; sequence NPWGCDCRMAWLAQELAGGSKTFGDRHMECATPAALAGRGLSEIPQTSFVCT. 2 cysteine pairs are disulfide-bonded: cysteine 146–cysteine 171 and cysteine 148–cysteine 192. The helical transmembrane segment at 220–240 threads the bilayer; sequence VAVVFGCITGLVTILLLVLTA.

It is found in the cell membrane. Functionally, binds selectively to the Gram-positive bacteria S.aureus and S.pneumoniae. Does not adhere to the Gram-negative bacteria E.coli and S.enterica. Probably recognizes peptidoglycans expressed on the bacterial cell surface. The sequence is that of Leucine-rich repeat-containing protein Bf66946 from Branchiostoma floridae (Florida lancelet).